An 825-amino-acid polypeptide reads, in one-letter code: Leucine-rich repeat and guanylate kinase domain-containing protein (825 aa).

The segment at 73–96 (DSDGDEDQGEGEAGSEESSESEML) is disordered. LRR repeat units lie at residues 129 to 149 (YLNLTLSGCNLIDVSILCGYV), 150 to 171 (HLQKLDLSANKIEDLSCVSCMP), 172 to 193 (YLLELNASQNNLTTFFNFKPPK), 194 to 215 (NLKKADFSHNQISEICDLSAYH), 216 to 237 (ALTKLILDGNEIEEISGLEMCN), 238 to 259 (NLIHLSLANNKITTINGLNKLP), 260 to 280 (IKILCLSNNQIEMITGLEDLK), 281 to 302 (ALQNLDLSHNQISSLQGLENHD), and 303 to 324 (LLEVINLEDNKIAELREIEYIK). The region spanning 337–375 (NPIQEKSEYWFFVIFMLLRLTELDQKKIKVEEKVSAVNK) is the LRRCT domain. A Guanylate kinase-like domain is found at 414–597 (YPMLILAGPE…AYQKLSQLIR (184 aa)). ATP is bound at residue 421 to 428 (GPEACGKR). The tract at residues 760–825 (PEGSISSHLG…TLPPIPQGRR (66 aa)) is disordered. Residues 763–774 (SISSHLGSGASD) show a composition bias toward polar residues. Pro residues predominate over residues 816–825 (TLPPIPQGRR).

Interacts (via guanylate kinase-like domain) with RIMBP3 (via coiled-coil region). Interacts (via guanylate kinase-like domain) with HOOK2. Interacts (via LRRCT domain) with KLC3. Interacts with HOOK1 and HOOK3.

The protein resides in the cytoplasmic vesicle. It localises to the secretory vesicle. The protein localises to the acrosome. It is found in the cytoplasm. Its subcellular location is the cytoskeleton. The protein resides in the cilium basal body. Its function is as follows. Involved in multiple aspects of sperm assembly including acrosome attachment, shaping of the sperm head and in the early aspects of axoneme development. Not essential for primary cilium biogenesis. The chain is Leucine-rich repeat and guanylate kinase domain-containing protein (LRGUK) from Homo sapiens (Human).